A 301-amino-acid chain; its full sequence is Phosphatidylglycerol--prolipoprotein diacylglyceryl transferase (301 aa).

A run of 4 helical transmembrane segments spans residues 10–30 (IAFS…LAGF), 57–77 (LLFY…MLFY), 92–112 (VWEG…AVAW), and 119–139 (MHMF…LGFG). Arg140 lines the a 1,2-diacyl-sn-glycero-3-phospho-(1'-sn-glycerol) pocket. 3 consecutive transmembrane segments (helical) span residues 202 to 222 (PSQL…LWLF), 230 to 250 (YAVS…VEFV), and 264 to 284 (LTRG…LFWL).

This sequence belongs to the Lgt family.

It is found in the cell inner membrane. It catalyses the reaction L-cysteinyl-[prolipoprotein] + a 1,2-diacyl-sn-glycero-3-phospho-(1'-sn-glycerol) = an S-1,2-diacyl-sn-glyceryl-L-cysteinyl-[prolipoprotein] + sn-glycerol 1-phosphate + H(+). Its pathway is protein modification; lipoprotein biosynthesis (diacylglyceryl transfer). Its function is as follows. Catalyzes the transfer of the diacylglyceryl group from phosphatidylglycerol to the sulfhydryl group of the N-terminal cysteine of a prolipoprotein, the first step in the formation of mature lipoproteins. This is Phosphatidylglycerol--prolipoprotein diacylglyceryl transferase from Xylella fastidiosa (strain M23).